We begin with the raw amino-acid sequence, 723 residues long: Fatty acid oxidation complex subunit alpha (723 aa).

The enoyl-CoA hydratase/isomerase stretch occupies residues 1–189; that stretch reads MIYQAETLQV…KIGLLDAVVD (189 aa). Asp-296 is a binding site for substrate. The interval 311–723 is 3-hydroxyacyl-CoA dehydrogenase; sequence NKETQRAAVL…FYGAQQQGSI (413 aa). Residues Met-325, Asp-344, 401-403, Lys-408, and Ser-430 contribute to the NAD(+) site; that span reads VVE. His-451 functions as the For 3-hydroxyacyl-CoA dehydrogenase activity in the catalytic mechanism. Residue Asn-454 coordinates NAD(+). Residues Asn-501 and Tyr-661 each contribute to the substrate site.

It in the N-terminal section; belongs to the enoyl-CoA hydratase/isomerase family. The protein in the C-terminal section; belongs to the 3-hydroxyacyl-CoA dehydrogenase family. As to quaternary structure, heterotetramer of two alpha chains (FadB) and two beta chains (FadA).

The catalysed reaction is a (3S)-3-hydroxyacyl-CoA + NAD(+) = a 3-oxoacyl-CoA + NADH + H(+). It carries out the reaction a (3S)-3-hydroxyacyl-CoA = a (2E)-enoyl-CoA + H2O. It catalyses the reaction a 4-saturated-(3S)-3-hydroxyacyl-CoA = a (3E)-enoyl-CoA + H2O. The enzyme catalyses (3S)-3-hydroxybutanoyl-CoA = (3R)-3-hydroxybutanoyl-CoA. The catalysed reaction is a (3Z)-enoyl-CoA = a 4-saturated (2E)-enoyl-CoA. It carries out the reaction a (3E)-enoyl-CoA = a 4-saturated (2E)-enoyl-CoA. It functions in the pathway lipid metabolism; fatty acid beta-oxidation. Its function is as follows. Involved in the aerobic and anaerobic degradation of long-chain fatty acids via beta-oxidation cycle. Catalyzes the formation of 3-oxoacyl-CoA from enoyl-CoA via L-3-hydroxyacyl-CoA. It can also use D-3-hydroxyacyl-CoA and cis-3-enoyl-CoA as substrate. The sequence is that of Fatty acid oxidation complex subunit alpha from Vibrio vulnificus (strain CMCP6).